A 311-amino-acid chain; its full sequence is Malate dehydrogenase (311 aa).

Residues 7 to 13 (GAAGGIG) and aspartate 34 contribute to the NAD(+) site. Substrate contacts are provided by arginine 81 and arginine 87. Residues asparagine 94 and 117-119 (ITN) contribute to the NAD(+) site. Substrate-binding residues include asparagine 119 and arginine 153. Histidine 177 (proton acceptor) is an active-site residue. Methionine 227 is an NAD(+) binding site.

It belongs to the LDH/MDH superfamily. MDH type 1 family. As to quaternary structure, homodimer.

The enzyme catalyses (S)-malate + NAD(+) = oxaloacetate + NADH + H(+). Functionally, catalyzes the reversible oxidation of malate to oxaloacetate. This Aeromonas hydrophila subsp. hydrophila (strain ATCC 7966 / DSM 30187 / BCRC 13018 / CCUG 14551 / JCM 1027 / KCTC 2358 / NCIMB 9240 / NCTC 8049) protein is Malate dehydrogenase.